Consider the following 540-residue polypeptide: MSSVLPTPVLPTPGKNINRGHFPDDFIFGAGTSSYQIEGAAREGGRGPSIWDTFTHTHPELIQDGSNGDTAVNSYNLYKEDIKIVKLMGLDAYRFSISWPRILPGGSINAGINQEGIKYYNNLIDELLANDIVPYVTLFHWDVPQALQDQYDGFLSDKIVDDFRDFAELCFWEFGDRVKNWITINEPQSYSDFFGVAYDTPPKAHALKASRLLVPTTVARPSKPARVFASTADPGTTTADQVYKVGHNLLLAHAAALKVYRDNFQDTQEGTFGMALVTQWMKPLNENNPADVEAASRAFDFKFGWFMQPLITGEYPKSMRQSLGPRLREFTRDQKKLLIGSYDYVGVNYYTATYVSSARPPNDNKAIFHTDGNFYTTDCKDGVLIGPLAGPAWLNIVPEGIYRCLQEIKAKYNNPVIYITENGVYEVNDTTKTLSEARVDTTRVDYLQDHLSYVLKARQQGVRVQGYFVWSLMDNWELRAGYTSRFGLIHVDYYNNFARYPKDSAIWFRNAFHKRLRIHVNKRPQEDDGAFDTPRKRLKK.

A beta-D-glucoside is bound by residues Q36, H140, 185–186 (NE), Y350, E421, W470, and F486. E186 functions as the Proton donor in the catalytic mechanism. The active-site Nucleophile is the E421.

The protein belongs to the glycosyl hydrolase 1 family.

The protein localises to the cytoplasm. Its subcellular location is the cytosol. The catalysed reaction is deacetylipecoside + H2O = deacetylipecoside aglycone + D-glucose. It carries out the reaction deacetylisoipecoside + H2O = deacetylisoipecoside aglycone + D-glucose. It participates in alkaloid biosynthesis. Its function is as follows. Beta-glucosidase catalyzing deglucosylation on N-deacetylisoipecoside and N-deacetylipecoside. This chain is Ipecac alkaloid beta-glucosidase 9, found in Carapichea ipecacuanha (Ipecac).